The primary structure comprises 1314 residues: Angiotensin-converting enzyme (1314 aa).

The N-terminal stretch at 1-35 (MGAASGQRGQGPPSPLLLLWLSLLLLLLPPSPAPA) is a signal peptide. Residues 36–1265 (LDPGLQPGNF…LEPQQARVGQ (1230 aa)) are Extracellular-facing. N-linked (GlcNAc...) asparagine glycans are attached at residues Asn-44, Asn-60, Asn-80, Asn-117, and Asn-166. Peptidase M2 domains follow at residues 46–630 (SADE…LGWP) and 649–1228 (VTDE…LGWP). Cysteines 163 and 171 form a disulfide. Tyr-237 contributes to the chloride binding site. N-linked (GlcNAc...) asparagine glycosylation occurs at Asn-324. Cys-365 and Cys-383 form a disulfide bridge. A Zn(2+)-binding site is contributed by His-396. The active-site Proton acceptor 1 is the Glu-397. The Zn(2+) site is built by His-400 and Glu-424. N-linked (GlcNAc...) asparagine glycosylation is present at Asn-515. His-526 functions as the Proton donor 1 in the catalytic mechanism. Arg-535 lines the chloride pocket. The cysteines at positions 551 and 563 are disulfide-linked. Residues Asn-683, Asn-701, Asn-720, and Asn-766 are each glycosylated (N-linked (GlcNAc...) asparagine). The cysteines at positions 763 and 769 are disulfide-linked. Chloride-binding residues include Arg-797 and Tyr-835. An N-linked (GlcNAc...) asparagine glycan is attached at Asn-948. Residues Cys-963 and Cys-981 are joined by a disulfide bond. His-994 provides a ligand contact to Zn(2+). Glu-995 (proton acceptor 2) is an active-site residue. The Zn(2+) site is built by His-998 and Glu-1022. Positions 1096 and 1100 each coordinate chloride. His-1124 functions as the Proton donor 2 in the catalytic mechanism. Residue Arg-1133 participates in chloride binding. The cysteines at positions 1149 and 1161 are disulfide-linked. N-linked (GlcNAc...) asparagine glycosylation is present at Asn-1197. The interval 1221–1262 (HGETLGWPEYNWTPNTARSEGPFPESGRVNFLGMYLEPQQAR) is juxtamembrane stalk. Residues 1266 to 1282 (WVLLFLGVSLLVATLGL) form a helical membrane-spanning segment. Residues 1283-1314 (THRLFSIRQHGHSLHRPHRGPQFGSEVELRHS) lie on the Cytoplasmic side of the membrane. Residues 1293 to 1314 (GHSLHRPHRGPQFGSEVELRHS) form a disordered region. Position 1307 is a phosphoserine (Ser-1307).

Belongs to the peptidase M2 family. As to quaternary structure, monomer and homodimer; homodimerizes following binding to an inhibitor. Interacts with calmodulin (CALM1, CALM2 or CALM3); interaction takes place in the cytoplasmic region and regulates phosphorylation and proteolytic cleavage. Zn(2+) is required as a cofactor. The cofactor is chloride. In terms of processing, produced following proteolytic cleavage by secretase enzymes that cleave the transmembrane form in the juxtamembrane stalk region upstream of the transmembrane region. Cleavage can take place at different sites of the juxtamembrane stalk region. Phosphorylated by CK2 on Ser-1307; which allows membrane retention. Phosphorylated on tyrosine residues on its extracellular part, promoting cleavage by secretase enzymes and formation of the soluble form (Angiotensin-converting enzyme, soluble form). Widely expressed with dominant expression in lung and kidney.

It localises to the cell membrane. The protein localises to the cytoplasm. The protein resides in the secreted. The enzyme catalyses Release of a C-terminal dipeptide, oligopeptide-|-Xaa-Yaa, when Xaa is not Pro, and Yaa is neither Asp nor Glu. Thus, conversion of angiotensin I to angiotensin II, with increase in vasoconstrictor activity, but no action on angiotensin II.. It carries out the reaction angiotensin I + H2O = L-histidyl-L-leucine + angiotensin II. It catalyses the reaction bradykinin + H2O = L-Phe-L-Arg + bradykinin(1-7). The catalysed reaction is substance P + H2O = substance P(1-9) + L-Leu-L-Met-NH2. The enzyme catalyses substance P + H2O = substance P(1-8) + Gly-L-Leu-L-Met-NH2. It carries out the reaction substance P + H2O = L-Phe-L-Phe-Gly-L-Leu-L-Met-NH2 + substance P(1-6). It catalyses the reaction neurotensin + H2O = neurotensin(1-11) + L-isoleucyl-L-leucine. The catalysed reaction is goralatide + H2O = N-acetyl-L-seryl-L-aspartate + L-lysyl-L-proline. The enzyme catalyses Met-enkephalin + H2O = L-phenylalanyl-L-methionine + L-tyrosylglycylglycine. It carries out the reaction Leu-enkephalin + H2O = L-tyrosylglycylglycine + L-phenylalanyl-L-leucine. It catalyses the reaction Met-enkephalin-Arg-Phe + H2O = L-arginyl-L-phenylalanine + Met-enkephalin. With respect to regulation, the dipeptidyl carboxypeptidase activity is strongly activated by chloride. The dipeptidyl carboxypeptidase activity is specifically inhibited by lisinopril, captopril and enalaprilat. Strongly inhibited by lisinopril and captopril. Functionally, dipeptidyl carboxypeptidase that removes dipeptides from the C-terminus of a variety of circulating hormones, such as angiotensin I, bradykinin or enkephalins, thereby playing a key role in the regulation of blood pressure, electrolyte homeostasis or synaptic plasticity. Composed of two similar catalytic domains, each possessing a functional active site, with different selectivity for substrates. Plays a major role in the angiotensin-renin system that regulates blood pressure and sodium retention by the kidney by converting angiotensin I to angiotensin II, resulting in an increase of the vasoconstrictor activity of angiotensin. Also able to inactivate bradykinin, a potent vasodilator, and therefore enhance the blood pressure response. Acts as a regulator of synaptic transmission by mediating cleavage of neuropeptide hormones, such as substance P, neurotensin or enkephalins. Catalyzes degradation of different enkephalin neuropeptides (Met-enkephalin, Leu-enkephalin, Met-enkephalin-Arg-Phe and possibly Met-enkephalin-Arg-Gly-Leu). Acts as a regulator of synaptic plasticity in the nucleus accumbens of the brain by mediating cleavage of Met-enkephalin-Arg-Phe, a strong ligand of Mu-type opioid receptor OPRM1, into Met-enkephalin. Met-enkephalin-Arg-Phe cleavage by ACE decreases activation of OPRM1, leading to long-term synaptic potentiation of glutamate release. Also acts as a regulator of hematopoietic stem cell differentiation by mediating degradation of hemoregulatory peptide N-acetyl-SDKP (AcSDKP). Acts as a regulator of cannabinoid signaling pathway by mediating degradation of hemopressin, an antagonist peptide of the cannabinoid receptor CNR1. Involved in amyloid-beta metabolism by catalyzing degradation of Amyloid-beta protein 40 and Amyloid-beta protein 42 peptides, thereby preventing plaque formation. Catalyzes cleavage of cholecystokinin (maturation of Cholecystokinin-8 and Cholecystokinin-5) and Gonadoliberin-1 (both maturation and degradation) hormones. Degradation of hemoregulatory peptide N-acetyl-SDKP (AcSDKP) and amyloid-beta proteins is mediated by the N-terminal catalytic domain, while angiotensin I and cholecystokinin cleavage is mediated by the C-terminal catalytic region. Its function is as follows. Soluble form that is released in blood plasma and other body fluids following proteolytic cleavage in the juxtamembrane stalk region. In terms of biological role, isoform produced by alternative promoter usage that is specifically expressed in spermatocytes and adult testis, and which is required for male fertility. In contrast to somatic isoforms, only contains one catalytic domain. Acts as a dipeptidyl carboxypeptidase that removes dipeptides from the C-terminus of substrates. The identity of substrates that are needed for male fertility is unknown. May also have a glycosidase activity which releases GPI-anchored proteins from the membrane by cleaving the mannose linkage in the GPI moiety. The GPIase activity was reported to be essential for the egg-binding ability of the sperm. This activity is however unclear and has been challenged by other groups, suggesting that it may be indirect. This chain is Angiotensin-converting enzyme, found in Mesocricetus auratus (Golden hamster).